A 318-amino-acid polypeptide reads, in one-letter code: UDP-3-O-acylglucosamine N-acyltransferase (318 aa).

His230 serves as the catalytic Proton acceptor.

It belongs to the transferase hexapeptide repeat family. LpxD subfamily. Homotrimer.

The enzyme catalyses a UDP-3-O-[(3R)-3-hydroxyacyl]-alpha-D-glucosamine + a (3R)-hydroxyacyl-[ACP] = a UDP-2-N,3-O-bis[(3R)-3-hydroxyacyl]-alpha-D-glucosamine + holo-[ACP] + H(+). It functions in the pathway bacterial outer membrane biogenesis; LPS lipid A biosynthesis. Catalyzes the N-acylation of UDP-3-O-acylglucosamine using 3-hydroxyacyl-ACP as the acyl donor. Is involved in the biosynthesis of lipid A, a phosphorylated glycolipid that anchors the lipopolysaccharide to the outer membrane of the cell. The chain is UDP-3-O-acylglucosamine N-acyltransferase from Wolinella succinogenes (strain ATCC 29543 / DSM 1740 / CCUG 13145 / JCM 31913 / LMG 7466 / NCTC 11488 / FDC 602W) (Vibrio succinogenes).